A 493-amino-acid chain; its full sequence is UDP-N-acetylmuramoyl-L-alanyl-D-glutamate--2,6-diaminopimelate ligase (493 aa).

UDP-N-acetyl-alpha-D-muramoyl-L-alanyl-D-glutamate is bound by residues Leu-30 and Ser-32. 117 to 123 (GTNGKTT) is a binding site for ATP. UDP-N-acetyl-alpha-D-muramoyl-L-alanyl-D-glutamate contacts are provided by residues Asn-158, 159 to 160 (TT), Ser-186, Gln-192, and Arg-194. Position 226 is an N6-carboxylysine (Lys-226). Meso-2,6-diaminopimelate-binding positions include Arg-388, 412–415 (DNPR), Gly-463, and Glu-467. The short motif at 412–415 (DNPR) is the Meso-diaminopimelate recognition motif element.

It belongs to the MurCDEF family. MurE subfamily. Mg(2+) is required as a cofactor. Carboxylation is probably crucial for Mg(2+) binding and, consequently, for the gamma-phosphate positioning of ATP.

The protein resides in the cytoplasm. It catalyses the reaction UDP-N-acetyl-alpha-D-muramoyl-L-alanyl-D-glutamate + meso-2,6-diaminopimelate + ATP = UDP-N-acetyl-alpha-D-muramoyl-L-alanyl-gamma-D-glutamyl-meso-2,6-diaminopimelate + ADP + phosphate + H(+). It participates in cell wall biogenesis; peptidoglycan biosynthesis. Its function is as follows. Catalyzes the addition of meso-diaminopimelic acid to the nucleotide precursor UDP-N-acetylmuramoyl-L-alanyl-D-glutamate (UMAG) in the biosynthesis of bacterial cell-wall peptidoglycan. The polypeptide is UDP-N-acetylmuramoyl-L-alanyl-D-glutamate--2,6-diaminopimelate ligase (Vibrio parahaemolyticus serotype O3:K6 (strain RIMD 2210633)).